The chain runs to 605 residues: Isocitrate dehydrogenase kinase/phosphatase (605 aa).

ATP-binding positions include 327–333 (APGIKGL) and Lys348. The active site involves Asp383.

The protein belongs to the AceK family.

It localises to the cytoplasm. The catalysed reaction is L-seryl-[isocitrate dehydrogenase] + ATP = O-phospho-L-seryl-[isocitrate dehydrogenase] + ADP + H(+). In terms of biological role, bifunctional enzyme which can phosphorylate or dephosphorylate isocitrate dehydrogenase (IDH) on a specific serine residue. This is a regulatory mechanism which enables bacteria to bypass the Krebs cycle via the glyoxylate shunt in response to the source of carbon. When bacteria are grown on glucose, IDH is fully active and unphosphorylated, but when grown on acetate or ethanol, the activity of IDH declines drastically concomitant with its phosphorylation. This chain is Isocitrate dehydrogenase kinase/phosphatase, found in Burkholderia orbicola (strain AU 1054).